Reading from the N-terminus, the 247-residue chain is PF03932 family protein CutC (247 aa).

The protein belongs to the CutC family.

Its subcellular location is the cytoplasm. In Vibrio parahaemolyticus serotype O3:K6 (strain RIMD 2210633), this protein is PF03932 family protein CutC.